A 270-amino-acid chain; its full sequence is Bis(5'-nucleosyl)-tetraphosphatase, symmetrical (270 aa).

It belongs to the Ap4A hydrolase family.

It catalyses the reaction P(1),P(4)-bis(5'-adenosyl) tetraphosphate + H2O = 2 ADP + 2 H(+). Functionally, hydrolyzes diadenosine 5',5'''-P1,P4-tetraphosphate to yield ADP. This chain is Bis(5'-nucleosyl)-tetraphosphatase, symmetrical, found in Actinobacillus pleuropneumoniae serotype 5b (strain L20).